The sequence spans 526 residues: Probable polyol transporter 4 (526 aa).

Disordered stretches follow at residues 1–21 (MMKNLPEVGNGGGSGFPAVSV) and 28–47 (YQRMDSDAEESQNHREAEAR). Positions 29 to 47 (QRMDSDAEESQNHREAEAR) are enriched in basic and acidic residues. Transmembrane regions (helical) follow at residues 63–83 (SLNNVLLGYDVGVMSGAVLFI), 92–112 (VQTEVLIGSLSIISLFGSLAG), 125–145 (MALAALVFQTGAAVMAVAPSF), 153–173 (TLAGIGIGLGVMIAPVYIAEI), 180–200 (GFFTSFPEIFINLGILLGYVS), 215–235 (IMLAVGILPSVFIGFALCVIP), 300–320 (MLIVGFGIQCFQQITGIDATV), 340–360 (AATVAVGVTKTVFILFATFLI), 371–391 (VSTIGMTLCLFCLSFTLTFLG), 395–415 (LGITLALLFVCGNVAFFSIGM), 437–457 (ALGAVGNRVCSGLVAMSFLSV), and 465–485 (GTFFVFSLVSALSVIFVYVLV).

Belongs to the major facilitator superfamily. Sugar transporter (TC 2.A.1.1) family.

It is found in the membrane. Plasma membrane sugar-proton symporter. This is Probable polyol transporter 4 (PLT4) from Arabidopsis thaliana (Mouse-ear cress).